A 525-amino-acid polypeptide reads, in one-letter code: Histidine-rich glycoprotein (525 aa).

The signal sequence occupies residues methionine 1–alanine 18. The Cystatin 1 domain occupies leucine 19–tyrosine 122. 5 disulfide bridges follow: cysteine 24–cysteine 504, cysteine 78–cysteine 89, cysteine 103–cysteine 124, cysteine 201–cysteine 414, and cysteine 216–cysteine 239. The interval glycine 41–lysine 84 is interaction with ATP5F1A. Asparagine 112, asparagine 123, and asparagine 200 each carry an N-linked (GlcNAc...) asparagine glycan. One can recognise a Cystatin 2 domain in the interval asparagine 135 to glutamate 240. The disordered stretch occupies residues glycine 273–leucine 447. A compositionally biased stretch (basic and acidic residues) spans glutamate 293 to leucine 303. 2 N-linked (GlcNAc...) asparagine glycosylation sites follow: asparagine 322 and asparagine 330. Residues histidine 339–histidine 404 show a composition bias toward basic residues. The interval glycine 345 to proline 379 is necessary for endothelial cell focal adhesions and anti-angiogenic activities. The residue at position 438 (serine 438) is a Phosphoserine.

In terms of assembly, interacts with THBS1 (via the TSP type I repeats); the interaction blocks the antiangiogenic effect of THBS1 with CD36. Interacts with HPSE; the interaction is enhanced at acidic pH, partially inhibits binding of HPSE to cell surface receptors and modulates its enzymatic activity. Interacts (via the HRR domain) with TMP1; the interaction partially mediates the antiangiogenic properties of HRG. Interacts with kappa and lambda light chains of IgG molecules. Interacts with ATP5F1A; the interaction occurs on the surface of T-cells and alters their cell morphology in concert with CONA. Binds IgG molecules containing kappa and lambda light chains and inhibits the formation of insoluble immunoglobulin complexes. Interacts with F12; the interaction, which is enhanced in the presence of zinc ions and inhibited by heparin-binding to HRG, inhibits factor XII autoactivation and contact-initiated coagulation. Interacts with PLG (via its Kringle domains); the interaction tethers PLG to the cell surface and enhances its activation. Interacts (via the HRR domain) with TPM1; the interaction appears to contribute to the antiangiogenic properties of the HRR domain. Interacts with THBS2; the interaction blocks the antiangiogenic effect of THBS2 with CD36. Zn(2+) serves as cofactor. In terms of processing, proteolytic cleavage produces several HRG fragments which are mostly disulfide-linked and, therefore, not released. Cleavage by plasmin is inhibited in the presence of heparin, zinc ions or in an acidic environment. Cleavage reduces binding of HRG to heparan sulfate, but enhances the ability of HRG to bind and tether plasminogen to the cell surface. On platelet activation, releases a 33 kDa antiangiogenic peptide which encompasses the HRR. Also cleaved in the C-terminal by plasmin. Post-translationally, N-glycosylated. Expressed in liver, blood plasma, serum and in platelets. Also present in fibrin clots, wound fluid from acute wounds and chronic leg ulcers.

It localises to the secreted. Plasma glycoprotein that binds a number of ligands such as heme, heparin, heparan sulfate, thrombospondin, plasminogen, and divalent metal ions. Binds heparin and heparin/glycosaminoglycans in a zinc-dependent manner. Binds heparan sulfate on the surface of liver, lung, kidney and heart endothelial cells. Binds to N-sulfated polysaccharide chains on the surface of liver endothelial cells. Inhibits rosette formation. Acts as an adapter protein and is implicated in regulating many processes such as immune complex and pathogen clearance, cell chemotaxis, cell adhesion, angiogenesis, coagulation and fibrinolysis. Mediates clearance of necrotic cells through enhancing the phagocytosis of necrotic cells in a heparan sulfate-dependent pathway. This process can be regulated by the presence of certain HRG ligands such as heparin and zinc ions. Binds to IgG subclasses of immunoglobins containing kappa and lambda light chains with different affinities regulating their clearance and inhibiting the formation of insoluble immune complexes. Tethers plasminogen to the cell surface. Binds T-cells and alters the cell morphology. Acts as a regulator of the vascular endothelial growth factor (VEGF) signaling pathway; inhibits endothelial cell motility by reducing VEGF-induced complex formation between PXN/paxillin and ILK/integrin-linked protein kinase and by promoting inhibition of VEGF-induced tyrosine phosphorylation of focal adhesion kinases and alpha-actinins in endothelial cells. Also plays a role in the regulation of tumor angiogenesis and tumor immune surveillance. Normalizes tumor vessels and promotes antitumor immunity by polarizing tumor-associated macrophages, leading to decreased tumor growth and metastasis. Modulates angiogenesis by blocking the CD6-mediated antiangiongenic effect of thrombospondins, THBS1 and THBS2. In Mus musculus (Mouse), this protein is Histidine-rich glycoprotein (Hrg).